A 152-amino-acid chain; its full sequence is Mid1-interacting protein 1A (152 aa).

The segment covering 87–105 (SEDQRRKKDTSASEPVRTE) has biased composition (basic and acidic residues). The segment at 87–109 (SEDQRRKKDTSASEPVRTEEESD) is disordered.

The protein belongs to the SPOT14 family. As to expression, expressed for a short period in the cells that will produce the enveloping layer (EVL).

It is found in the nucleus. The protein localises to the cytoplasm. It localises to the cytoskeleton. Involved in stabilization of microtubules. May play a role in the regulation of lipogenesis. The sequence is that of Mid1-interacting protein 1A (mid1ip1a) from Danio rerio (Zebrafish).